Here is a 320-residue protein sequence, read N- to C-terminus: Na(+)-translocating NADH-quinone reductase subunit C (320 aa).

The helical transmembrane segment at 16-36 threads the bilayer; the sequence is WYIVSFILGLSLFAGVLLSTI. Residue T285 is modified to FMN phosphoryl threonine.

Belongs to the NqrC family. Composed of six subunits; NqrA, NqrB, NqrC, NqrD, NqrE and NqrF. The cofactor is FMN.

It is found in the cell inner membrane. The catalysed reaction is a ubiquinone + n Na(+)(in) + NADH + H(+) = a ubiquinol + n Na(+)(out) + NAD(+). Its function is as follows. NQR complex catalyzes the reduction of ubiquinone-1 to ubiquinol by two successive reactions, coupled with the transport of Na(+) ions from the cytoplasm to the periplasm. NqrA to NqrE are probably involved in the second step, the conversion of ubisemiquinone to ubiquinol. This is Na(+)-translocating NADH-quinone reductase subunit C from Chlamydia pneumoniae (Chlamydophila pneumoniae).